A 227-amino-acid polypeptide reads, in one-letter code: 2,3-bisphosphoglycerate-dependent phosphoglycerate mutase (227 aa).

Residues 7-14 (RHGQSEWN), 20-21 (TG), Arg-59, 86-89 (ERHY), Lys-97, 113-114 (RR), and 182-183 (GN) each bind substrate. The Tele-phosphohistidine intermediate role is filled by His-8. The active-site Proton donor/acceptor is the Glu-86.

Belongs to the phosphoglycerate mutase family. BPG-dependent PGAM subfamily. Homodimer.

It carries out the reaction (2R)-2-phosphoglycerate = (2R)-3-phosphoglycerate. Its pathway is carbohydrate degradation; glycolysis; pyruvate from D-glyceraldehyde 3-phosphate: step 3/5. Catalyzes the interconversion of 2-phosphoglycerate and 3-phosphoglycerate. In Neisseria meningitidis serogroup A / serotype 4A (strain DSM 15465 / Z2491), this protein is 2,3-bisphosphoglycerate-dependent phosphoglycerate mutase.